Consider the following 1073-residue polypeptide: Transmembrane protein 132E (1073 aa).

Positions 1 to 33 are cleaved as a signal peptide; sequence MGHFVVQGDLPWILCSLRLVIMIIAGKVSPTSS. Residues 34–899 lie on the Extracellular side of the membrane; it reads DALFSVPVPS…MTDLEIGMYA (866 aa). Residue asparagine 102 is glycosylated (N-linked (GlcNAc...) asparagine). Positions 246–270 are disordered; sequence DPDSNDECGESYPRRGGPSRGESLS. Residues asparagine 324, asparagine 396, and asparagine 746 are each glycosylated (N-linked (GlcNAc...) asparagine). Residues 900–920 traverse the membrane as a helical segment; it reads LLGVFCLAILVFLINCIVFVL. The Cytoplasmic portion of the chain corresponds to 921-1073; it reads KYRHKRIPPE…DYMRRIKEIA (153 aa). Over residues 952–970 the composition is skewed to polar residues; it reads TQSDLSPQTVESPSNTLEG. A disordered region spans residues 952–1024; the sequence is TQSDLSPQTV…PTSKRKRVKF (73 aa). Residues 982–994 show a composition bias toward low complexity; that stretch reads SGSSQTSVQSQVH.

Belongs to the TMEM132 family.

The protein localises to the membrane. Required for normal inner ear hair cell function and hearing. In Danio rerio (Zebrafish), this protein is Transmembrane protein 132E (tmem132e).